A 316-amino-acid polypeptide reads, in one-letter code: MTRVESNNTASQAPPSGAGTLEQQVEVVIVTGLSGAGRGTAAKVLEDLGWYVADNLPPELIGRMVELGAAADPPIRRLALVMDVRSRFFTGDLSVVADQLRALGLRTRVLFLEASDDVLIRRFGFARRRHPLQSESADGTLSAGIAVERVRLAGVKAAADLVIDTTELSIHQLHRKLEEAYGGGAPAALQLTVQSFGFKYGVPLDADMVLDVRFLPNPHWIPELREHSGQETVVSEYVLSRPGAQDYLHTCHHLVDLTTSGYRQEGKRYMTVAVGCTGGKHRSVAIAEALGELIGADTSAESADVVRVVHRDLGRE.

32-39 contributes to the ATP binding site; the sequence is GLSGAGRG. 83-86 serves as a coordination point for GTP; it reads DVRS.

It belongs to the RapZ-like family.

Displays ATPase and GTPase activities. This is Nucleotide-binding protein NFA_35930 from Nocardia farcinica (strain IFM 10152).